We begin with the raw amino-acid sequence, 274 residues long: 2,3,4,5-tetrahydropyridine-2,6-dicarboxylate N-succinyltransferase (274 aa).

It belongs to the transferase hexapeptide repeat family.

It localises to the cytoplasm. It catalyses the reaction (S)-2,3,4,5-tetrahydrodipicolinate + succinyl-CoA + H2O = (S)-2-succinylamino-6-oxoheptanedioate + CoA. It participates in amino-acid biosynthesis; L-lysine biosynthesis via DAP pathway; LL-2,6-diaminopimelate from (S)-tetrahydrodipicolinate (succinylase route): step 1/3. The chain is 2,3,4,5-tetrahydropyridine-2,6-dicarboxylate N-succinyltransferase from Erwinia tasmaniensis (strain DSM 17950 / CFBP 7177 / CIP 109463 / NCPPB 4357 / Et1/99).